The chain runs to 389 residues: Probable dual-specificity RNA methyltransferase RlmN (389 aa).

The active-site Proton acceptor is Glu114. In terms of domain architecture, Radical SAM core spans Gln120–Asp358. The cysteines at positions 127 and 363 are disulfide-linked. [4Fe-4S] cluster is bound by residues Cys134, Cys138, and Cys141. S-adenosyl-L-methionine contacts are provided by residues Gly186–Glu187, Ser218, Ser241–His243, and Asn319. Catalysis depends on Cys363, which acts as the S-methylcysteine intermediate. The tract at residues Thr370–Lys389 is disordered. The span at Met371–Lys389 shows a compositional bias: basic and acidic residues.

Belongs to the radical SAM superfamily. RlmN family. Requires [4Fe-4S] cluster as cofactor.

The protein localises to the cytoplasm. The enzyme catalyses adenosine(2503) in 23S rRNA + 2 reduced [2Fe-2S]-[ferredoxin] + 2 S-adenosyl-L-methionine = 2-methyladenosine(2503) in 23S rRNA + 5'-deoxyadenosine + L-methionine + 2 oxidized [2Fe-2S]-[ferredoxin] + S-adenosyl-L-homocysteine. It carries out the reaction adenosine(37) in tRNA + 2 reduced [2Fe-2S]-[ferredoxin] + 2 S-adenosyl-L-methionine = 2-methyladenosine(37) in tRNA + 5'-deoxyadenosine + L-methionine + 2 oxidized [2Fe-2S]-[ferredoxin] + S-adenosyl-L-homocysteine. Its function is as follows. Specifically methylates position 2 of adenine 2503 in 23S rRNA and position 2 of adenine 37 in tRNAs. The protein is Probable dual-specificity RNA methyltransferase RlmN of Streptococcus thermophilus (strain ATCC BAA-250 / LMG 18311).